We begin with the raw amino-acid sequence, 458 residues long: Elongation factor 1-alpha (458 aa).

A N,N,N-trimethylglycine modification is found at G2. K3 is subject to N6,N6-dimethyllysine; alternate. Position 3 is an N6-methyllysine; alternate (K3). Residues 5–240 (KTHVNVVVIG…DAIEPPVRPS (236 aa)) enclose the tr-type G domain. The G1 stretch occupies residues 14-21 (GHVDSGKS). 14–21 (GHVDSGKS) is a binding site for GTP. K30 is modified (N6-methyllysine). Residues 70–74 (GITID) form a G2 region. Residue K79 is modified to N6,N6,N6-trimethyllysine. The segment at 91–94 (DAPG) is G3. GTP is bound by residues 91 to 95 (DAPGH) and 153 to 156 (NKMD). Residues 153 to 156 (NKMD) are G4. The G5 stretch occupies residues 192–194 (SGW). K316 carries the N6,N6-dimethyllysine; alternate modification. N6-methyllysine; alternate is present on K316. N6-methyllysine is present on K390.

Belongs to the TRAFAC class translation factor GTPase superfamily. Classic translation factor GTPase family. EF-Tu/EF-1A subfamily.

Its subcellular location is the cytoplasm. This protein promotes the GTP-dependent binding of aminoacyl-tRNA to the A-site of ribosomes during protein biosynthesis. This Mucor circinelloides f. lusitanicus (Mucor racemosus var. lusitanicus) protein is Elongation factor 1-alpha (TEF-2).